The chain runs to 37 residues: Protein 6.3 (37 aa).

The chain is Protein 6.3 from Escherichia phage T7 (Bacteriophage T7).